The chain runs to 191 residues: Calcium-binding protein L (191 aa).

G2 carries the N-myristoyl glycine lipid modification. EF-hand domains follow at residues 25 to 59, 60 to 95, and 96 to 131; these read EQVS…RFKD, YDDA…ITKS, and PVSD…ALNT. Ca(2+) contacts are provided by D73, D75, N77, R79, and E84.

It belongs to the recoverin family.

This Dictyostelium discoideum (Social amoeba) protein is Calcium-binding protein L (cbpL).